Reading from the N-terminus, the 870-residue chain is Probable inorganic carbon transporter subunit DabA (870 aa).

The Zn(2+) site is built by cysteine 381, aspartate 383, histidine 564, and cysteine 579.

It belongs to the inorganic carbon transporter (TC 9.A.2) DabA family. Forms a complex with DabB. It depends on Zn(2+) as a cofactor.

Its subcellular location is the cell membrane. Functionally, part of an energy-coupled inorganic carbon pump. This chain is Probable inorganic carbon transporter subunit DabA, found in Geobacillus kaustophilus (strain HTA426).